Reading from the N-terminus, the 186-residue chain is Small ribosomal subunit protein uS7 (186 aa).

The protein belongs to the universal ribosomal protein uS7 family. As to quaternary structure, part of the 30S ribosomal subunit.

One of the primary rRNA binding proteins, it binds directly to 16S rRNA where it nucleates assembly of the head domain of the 30S subunit. Is located at the subunit interface close to the decoding center. This chain is Small ribosomal subunit protein uS7, found in Methanothermobacter thermautotrophicus (strain ATCC 29096 / DSM 1053 / JCM 10044 / NBRC 100330 / Delta H) (Methanobacterium thermoautotrophicum).